The chain runs to 249 residues: Probable transcriptional regulatory protein Psyc_0938 (249 aa).

The protein belongs to the TACO1 family.

The protein resides in the cytoplasm. The sequence is that of Probable transcriptional regulatory protein Psyc_0938 from Psychrobacter arcticus (strain DSM 17307 / VKM B-2377 / 273-4).